A 393-amino-acid polypeptide reads, in one-letter code: Elongation factor Tu (393 aa).

The region spanning 10–203 (KPHVNIGTIG…AVDSYIPQPV (194 aa)) is the tr-type G domain. The segment at 19–26 (GHVDHGKT) is G1. 19 to 26 (GHVDHGKT) is a GTP binding site. Mg(2+) is bound at residue Thr26. The segment at 60-64 (GITIS) is G2. Residues 81–84 (DCPG) are G3. Residues 81 to 85 (DCPGH) and 136 to 139 (NKVD) each bind GTP. Positions 136–139 (NKVD) are G4. Residues 173–175 (SAL) are G5.

This sequence belongs to the TRAFAC class translation factor GTPase superfamily. Classic translation factor GTPase family. EF-Tu/EF-1A subfamily. Monomer.

The protein resides in the cytoplasm. It carries out the reaction GTP + H2O = GDP + phosphate + H(+). In terms of biological role, GTP hydrolase that promotes the GTP-dependent binding of aminoacyl-tRNA to the A-site of ribosomes during protein biosynthesis. The polypeptide is Elongation factor Tu (Chlorobaculum tepidum (strain ATCC 49652 / DSM 12025 / NBRC 103806 / TLS) (Chlorobium tepidum)).